The primary structure comprises 207 residues: SPRY domain-containing protein 4 (207 aa).

The region spanning 12-207 (YRWGTKRWGV…HSGLEVPKGL (196 aa)) is the B30.2/SPRY domain. N6-acetyllysine is present on residues K53 and K130. N6-succinyllysine is present on K139.

In Rattus norvegicus (Rat), this protein is SPRY domain-containing protein 4 (Spryd4).